The primary structure comprises 349 residues: Phosphoribosylformylglycinamidine cyclo-ligase (349 aa).

The protein belongs to the AIR synthase family.

It is found in the cytoplasm. It carries out the reaction 2-formamido-N(1)-(5-O-phospho-beta-D-ribosyl)acetamidine + ATP = 5-amino-1-(5-phospho-beta-D-ribosyl)imidazole + ADP + phosphate + H(+). Its pathway is purine metabolism; IMP biosynthesis via de novo pathway; 5-amino-1-(5-phospho-D-ribosyl)imidazole from N(2)-formyl-N(1)-(5-phospho-D-ribosyl)glycinamide: step 2/2. This is Phosphoribosylformylglycinamidine cyclo-ligase from Listeria monocytogenes serotype 4a (strain HCC23).